A 137-amino-acid chain; its full sequence is 5-hydroxytryptamine receptor 4 (137 aa).

Residues 12–35 (TPLRVAVLLAGCWAIPVLISFLPI) traverse the membrane as a helical segment. The N-linked (GlcNAc...) asparagine glycan is linked to Asn58. Residues 67–90 (NKPYAITCSVVAFYIPFLLMVLAY) form a helical membrane-spanning segment. Positions 112-137 (APAEGRPPSADQHSTHRMRTETKAAK) are disordered.

It belongs to the G-protein coupled receptor 1 family. Interacts (via C-terminus 330-346 AA) with GRK5; this interaction is promoted by 5-HT (serotonin).

It is found in the cell membrane. The protein resides in the endosome membrane. In terms of biological role, G-protein coupled receptor for 5-hydroxytryptamine (serotonin), a biogenic hormone that functions as a neurotransmitter, a hormone and a mitogen. Ligand binding causes a conformation change that triggers signaling via guanine nucleotide-binding proteins (G proteins) and modulates the activity of downstream effectors. HTR4 is coupled to G(s) G alpha proteins and mediates activation of adenylate cyclase activity. The polypeptide is 5-hydroxytryptamine receptor 4 (HTR4) (Sus scrofa (Pig)).